The chain runs to 495 residues: Catalase B (495 aa).

A disordered region spans residues 1–25 (MSNNKKLTSLFGAPVSDRENSMTAG). Catalysis depends on residues His-55 and Asn-128. Tyr-338 serves as a coordination point for heme.

It belongs to the catalase family. As to quaternary structure, homodimer. Heme is required as a cofactor.

It carries out the reaction 2 H2O2 = O2 + 2 H2O. Its function is as follows. Decomposes hydrogen peroxide into water and oxygen; serves to protect cells from the toxic effects of hydrogen peroxide. This is Catalase B (katB) from Staphylococcus xylosus.